The sequence spans 297 residues: Small ribosomal subunit protein uS9m (297 aa).

The interval 278–297 is disordered; sequence VERKKPGKRKARKMPTWVKR.

It belongs to the universal ribosomal protein uS9 family.

The protein localises to the mitochondrion. This is Small ribosomal subunit protein uS9m (MRPS9) from Kluyveromyces lactis (strain ATCC 8585 / CBS 2359 / DSM 70799 / NBRC 1267 / NRRL Y-1140 / WM37) (Yeast).